Consider the following 285-residue polypeptide: CCR4-NOT transcription complex subunit 7 (285 aa).

Positions 40, 42, 161, 230, and 278 each coordinate a divalent metal cation.

Belongs to the CAF1 family. In terms of assembly, component of the CCR4-NOT complex. Requires Mn(2+) as cofactor. The cofactor is Mg(2+). It depends on Co(2+) as a cofactor.

It localises to the nucleus. Its subcellular location is the cytoplasm. The enzyme catalyses Exonucleolytic cleavage of poly(A) to 5'-AMP.. Its function is as follows. Has 3'-5' poly(A) exoribonuclease activity for synthetic poly(A) RNA substrate. Catalytic component of the CCR4-NOT complex which is one of the major cellular mRNA deadenylases and is linked to various cellular processes including bulk mRNA degradation, miRNA-mediated repression, translational repression during translational initiation and general transcription regulation. During miRNA-mediated repression the complex also seems to act as translational repressor during translational initiation. Additional complex functions may be a consequence of its influence on mRNA expression. The polypeptide is CCR4-NOT transcription complex subunit 7 (cnot7) (Xenopus tropicalis (Western clawed frog)).